We begin with the raw amino-acid sequence, 1386 residues long: Pleckstrin homology domain-containing family G member 2 (1386 aa).

Disordered stretches follow at residues 1-21 (MPEG…GCGR) and 36-82 (TAPA…PLPG). Composition is skewed to low complexity over residues 8-17 (LSLSKPSPSL) and 45-62 (SPRG…GSEG). Residue serine 90 is modified to Phosphoserine. In terms of domain architecture, DH spans 102–283 (RLERVAREIV…TAVAWYINDM (182 aa)). A PH domain is found at 313–411 (ELVLEGAFRG…WIHCLQRLFF (99 aa)). Disordered stretches follow at residues 436-540 (KSKP…PSGT), 554-612 (GLRD…PSPL), 701-739 (EPAE…EEGV), 790-815 (ILED…RTAS), and 829-859 (QQMQ…SPCL). Threonine 445 is modified (phosphothreonine). A phosphoserine mark is found at serine 450 and serine 469. Residues 592 to 603 (SEEEEEEEEGLE) are compositionally biased toward acidic residues. Phosphoserine is present on residues serine 911 and serine 1049. 2 disordered regions span residues 1037 to 1099 (PVPK…PLPC) and 1162 to 1191 (TSPK…DTQV). Polar residues-rich tracts occupy residues 1048 to 1059 (ESPTNIPLTKQG) and 1073 to 1086 (QPIQ…SSLD). Threonine 1257 bears the Phosphothreonine mark. 2 positions are modified to phosphoserine: serine 1261 and serine 1310. 2 disordered regions span residues 1291-1333 (ARRQ…ARRL) and 1367-1386 (TQES…PFHM). The segment covering 1301–1317 (PAASRGSWSSAPTSRAS) has biased composition (low complexity). The span at 1318 to 1330 (SPPPQPQPPPPPA) shows a compositional bias: pro residues.

May be a transforming oncogene with exchange activity for CDC42. May be a guanine-nucleotide exchange factor (GEF) for RAC1 and CDC42. Activated by the binding to subunits beta and gamma of the heterotrimeric guanine nucleotide-binding protein (G protein). Involved in the regulation of actin polymerization. This is Pleckstrin homology domain-containing family G member 2 (PLEKHG2) from Homo sapiens (Human).